The chain runs to 201 residues: Imidazoleglycerol-phosphate dehydratase (201 aa).

Belongs to the imidazoleglycerol-phosphate dehydratase family.

The protein resides in the cytoplasm. The enzyme catalyses D-erythro-1-(imidazol-4-yl)glycerol 3-phosphate = 3-(imidazol-4-yl)-2-oxopropyl phosphate + H2O. Its pathway is amino-acid biosynthesis; L-histidine biosynthesis; L-histidine from 5-phospho-alpha-D-ribose 1-diphosphate: step 6/9. The polypeptide is Imidazoleglycerol-phosphate dehydratase (Prochlorococcus marinus (strain MIT 9515)).